The following is a 107-amino-acid chain: Putative double-stranded DNA mimic protein HSM_1473 (107 aa).

It belongs to the putative dsDNA mimic protein family.

May act as a double-stranded DNA (dsDNA) mimic. Probably regulates the activity of a dsDNA-binding protein. The polypeptide is Putative double-stranded DNA mimic protein HSM_1473 (Histophilus somni (strain 2336) (Haemophilus somnus)).